The following is a 163-amino-acid chain: Small ribosomal subunit protein bS18c (163 aa).

Disordered regions lie at residues 1 to 52 (MYIS…IGPG) and 144 to 163 (NLRN…SSDC). The span at 7 to 48 (PFRKSKQPFRKSKQPFHKSKQPFRKFKQPFRKSKQPFRRRSR) shows a compositional bias: basic residues.

The protein belongs to the bacterial ribosomal protein bS18 family. In terms of assembly, part of the 30S ribosomal subunit.

It is found in the plastid. The protein localises to the chloroplast. This Saccharum hybrid (Sugarcane) protein is Small ribosomal subunit protein bS18c.